The chain runs to 427 residues: NADPH-dependent stearoyl-CoA 9-desaturase (427 aa).

Fe cation is bound by residues His-90, His-94, His-125, His-129, His-130, His-304, His-308, and His-309.

It belongs to the fatty acid desaturase type 1 family. In terms of assembly, interacts with the electron transfer protein Rv3230c to form a functional acyl-CoA desaturase complex. Fe(2+) serves as cofactor. Is rapidly degraded by a mycobacterial protein degradation system that specifically targets the residues LAA at the C-terminus, leading to a post-translational proteolytic regulation of DesA3 essential activity.

It is found in the cell membrane. It catalyses the reaction octadecanoyl-CoA + NADPH + O2 + H(+) = (9Z)-octadecenoyl-CoA + NADP(+) + 2 H2O. It participates in lipid metabolism; fatty acid metabolism. Is likely involved in the aerobic desaturation system responsible for the synthesis of oleic acid from stearoyl-CoA; oleic acid is a precursor of mycobacterial membrane phospholipids and triglycerides. Catalyzes the conversion of stearoyl-CoA to oleoyl-CoA by introduction of a cis double bond between carbons 9 and 10 of the acyl chain. Requires the electron transfer partner Rv3230c to pass two electrons from NADPH to its active site diiron center. Is also able to catalyze the 9-desaturation of palmitoyl-CoA to palmitoleoyl-CoA. The polypeptide is NADPH-dependent stearoyl-CoA 9-desaturase (desA3) (Mycobacterium tuberculosis (strain CDC 1551 / Oshkosh)).